The following is a 478-amino-acid chain: Leukotoxin secretion protein D (478 aa).

Residues 1–77 (MKIWLSGIYE…LAVAIVLASV (77 aa)) are Cytoplasmic-facing. Residues 78-98 (SKVEIVATAPGKLTFSGRSKE) traverse the membrane as a helical segment. Residues 99–478 (IKPIENTIVQ…ESVTESLRER (380 aa)) lie on the Periplasmic side of the membrane.

Belongs to the membrane fusion protein (MFP) (TC 8.A.1) family.

The protein localises to the cell inner membrane. Its function is as follows. Involved in the transport of the Leukotoxin. This chain is Leukotoxin secretion protein D (lktD), found in Pasteurella haemolytica-like sp. (strain 5943B).